The primary structure comprises 152 residues: Transcriptional regulator MraZ (152 aa).

2 SpoVT-AbrB domains span residues 5–52 (ATLV…PLPE) and 81–124 (ASEC…DETT).

Belongs to the MraZ family. As to quaternary structure, forms oligomers.

It localises to the cytoplasm. Its subcellular location is the nucleoid. Functionally, negatively regulates its own expression and that of the subsequent genes in the proximal part of the division and cell wall (dcw) gene cluster. Acts by binding directly to DNA. May also regulate the expression of genes outside the dcw cluster. This is Transcriptional regulator MraZ from Salmonella paratyphi A (strain ATCC 9150 / SARB42).